The chain runs to 397 residues: Serpin B10 (397 aa).

Cysteines 68 and 395 form a disulfide. The Nuclear localization signal motif lies at 74–77 (KKRK).

It belongs to the serpin family. Ov-serpin subfamily. As to expression, expressed specifically in myeloid cells and the bone marrow.

The protein localises to the nucleus. It is found in the cytoplasm. Its function is as follows. Protease inhibitor that may play a role in the regulation of protease activities during hematopoiesis and apoptosis induced by TNF. May regulate protease activities in the cytoplasm and in the nucleus. The polypeptide is Serpin B10 (SERPINB10) (Homo sapiens (Human)).